Here is a 471-residue protein sequence, read N- to C-terminus: Type 2 glycosyltransferase (471 aa).

The helical transmembrane segment at 4 to 24 (ILGWFWAFVSAFVLRYLRTIV) threads the bilayer. N-linked (GlcNAc...) asparagine glycans are attached at residues N29, N88, and N222. The next 3 membrane-spanning stretches (helical) occupy residues 305–325 (CLQTTITAWALPWDAFLFYSL), 339–359 (MAFTLLFLWIFGFTKNVKLWG), and 368–388 (VIYIPVHIAFGYFHGLIKFWG). N-linked (GlcNAc...) asparagine glycosylation is present at N458.

It belongs to the GT2 glycosyltransferase family.

It is found in the cell membrane. Glycosyltransferase involved in the maintenance of the outermost surface of the fungal cell wall. Likely functions in the synthesis of a currently unknown, potentially minor but widespread, extracellular or outer cell wall polysaccharide which plays a key role in facilitating many interactions between plants and fungi by enabling hyphal growth on solid matrices. The polypeptide is Type 2 glycosyltransferase (Zymoseptoria tritici (strain CBS 115943 / IPO323) (Speckled leaf blotch fungus)).